The sequence spans 290 residues: 33 kDa chaperonin (290 aa).

Disulfide bonds link Cys235–Cys237 and Cys268–Cys271.

It belongs to the HSP33 family. Under oxidizing conditions two disulfide bonds are formed involving the reactive cysteines. Under reducing conditions zinc is bound to the reactive cysteines and the protein is inactive.

It localises to the cytoplasm. Redox regulated molecular chaperone. Protects both thermally unfolding and oxidatively damaged proteins from irreversible aggregation. Plays an important role in the bacterial defense system toward oxidative stress. This Streptococcus pyogenes serotype M1 protein is 33 kDa chaperonin.